Reading from the N-terminus, the 162-residue chain is CD-NTase-associated protein 7 (162 aa).

The tract at residues 138–162 is disordered; sequence HSGLTQSGGREYSSNGYGMQRKDYN. Residues 139 to 154 are compositionally biased toward polar residues; sequence SGLTQSGGREYSSNGY.

The protein belongs to the HORMA family. HORMA1 subfamily. As to quaternary structure, forms complexes with CdnC with 1:1 and 2:2 stoichimetry, and a 1:1:6 CdnC:Cap7:Cap6 complex.

In terms of biological role, sensor protein of a CBASS antivirus system. CBASS (cyclic oligonucleotide-based antiphage signaling system) provides immunity against bacteriophage. The CD-NTase protein synthesizes cyclic nucleotides in response to infection; these serve as specific second messenger signals. The signals activate a diverse range of effectors, leading to bacterial cell death and thus abortive phage infection. A type III CBASS system. Expression of this CBASS system (Cap18-Cap6-Cap7-CdnC-CapW-Cap17) in a susceptible E.coli (strain MG1655) confers resistance to bacteriophage P1. The sensor protein for this CBASS system. Binds to a closure peptide, which allows it to activate CdnC for second messenger synthesis. The sequence is that of CD-NTase-associated protein 7 from Escherichia coli (strain KTE188).